Reading from the N-terminus, the 484-residue chain is Glutamate--tRNA ligase (484 aa).

The 'HIGH' region motif lies at 11–21 (PSPTGYLHIGN). Positions 252–256 (KLSKR) match the 'KMSKS' region motif. An ATP-binding site is contributed by Lys-255.

It belongs to the class-I aminoacyl-tRNA synthetase family. Glutamate--tRNA ligase type 1 subfamily. As to quaternary structure, monomer.

It is found in the cytoplasm. The catalysed reaction is tRNA(Glu) + L-glutamate + ATP = L-glutamyl-tRNA(Glu) + AMP + diphosphate. Catalyzes the attachment of glutamate to tRNA(Glu) in a two-step reaction: glutamate is first activated by ATP to form Glu-AMP and then transferred to the acceptor end of tRNA(Glu). This Staphylococcus aureus (strain Mu3 / ATCC 700698) protein is Glutamate--tRNA ligase.